Reading from the N-terminus, the 319-residue chain is Homoserine dehydrogenase (319 aa).

Phenylalanine 10, threonine 12, valine 13, arginine 40, lysine 57, serine 92, serine 93, serine 114, and lysine 116 together coordinate NADPH. Valine 13 is a binding site for NAD(+). NADP(+)-binding residues include valine 13 and arginine 40. Residue serine 92 participates in NAD(+) binding. Position 92 (serine 92) interacts with NADP(+). NADP(+)-binding residues include serine 114 and lysine 116. Residues glutamate 140, valine 143, alanine 145, and threonine 147 each coordinate Na(+). NADP(+) contacts are provided by glycine 197 and glutamate 200. 2 residues coordinate L-homoserine: glutamate 200 and aspartate 211. The active-site Proton donor is the lysine 215. Glycine 296 serves as a coordination point for NADPH. Glycine 296 is an NAD(+) binding site. An NADP(+)-binding site is contributed by glycine 296.

Belongs to the homoserine dehydrogenase family. Homodimer. It depends on a metal cation as a cofactor.

It carries out the reaction L-homoserine + NAD(+) = L-aspartate 4-semialdehyde + NADH + H(+). It participates in amino-acid biosynthesis; L-methionine biosynthesis via de novo pathway; L-homoserine from L-aspartate: step 3/3. The protein operates within amino-acid biosynthesis; L-threonine biosynthesis; L-threonine from L-aspartate: step 3/5. In terms of biological role, catalyzes the conversion of L-aspartate-beta-semialdehyde (L-Asa) to L-homoserine (L-Hse), the third step in the biosynthesis of threonine and methionine from aspartate. Utilizes NADH but not NADPH as coenzyme. In Pyrococcus horikoshii (strain ATCC 700860 / DSM 12428 / JCM 9974 / NBRC 100139 / OT-3), this protein is Homoserine dehydrogenase.